The following is a 731-amino-acid chain: Ubiquitin carboxyl-terminal hydrolase 17 (731 aa).

Residues cysteine 57, cysteine 60, cysteine 68, cysteine 71, cysteine 77, cysteine 81, histidine 90, and cysteine 94 each contribute to the Zn(2+) site. The MYND-type zinc-finger motif lies at 57-94 (CAVCLYPTTTRCSQCKSVRYCSSKCQILHWRRGHKEEC). Disordered stretches follow at residues 171-219 (YETR…DSAN) and 262-281 (LPSK…SGLK). Polar residues-rich tracts occupy residues 207–219 (GNQN…DSAN) and 265–281 (KANS…SGLK). One can recognise a USP domain in the interval 329–633 (FGLVNLGNSC…GAYMLLYARD (305 aa)). The Nucleophile role is filled by cysteine 338. Histidine 592 acts as the Proton acceptor in catalysis. The disordered stretch occupies residues 637–702 (PVSKNGGRKS…TSSCSTKDSS (66 aa)). Residues 677–701 (DWSSGSLSSMFSSSDTTSSCSTKDS) are compositionally biased toward low complexity.

The protein belongs to the peptidase C19 family.

It catalyses the reaction Thiol-dependent hydrolysis of ester, thioester, amide, peptide and isopeptide bonds formed by the C-terminal Gly of ubiquitin (a 76-residue protein attached to proteins as an intracellular targeting signal).. In terms of biological role, recognizes and hydrolyzes the peptide bond at the C-terminal Gly of ubiquitin. Involved in the processing of poly-ubiquitin precursors as well as that of ubiquitinated proteins. The polypeptide is Ubiquitin carboxyl-terminal hydrolase 17 (UBP17) (Arabidopsis thaliana (Mouse-ear cress)).